We begin with the raw amino-acid sequence, 232 residues long: Protein FAM246B (232 aa).

A compositionally biased stretch (basic and acidic residues) spans 19-31 (EVLRRVTGRRRDP). Disordered regions lie at residues 19 to 47 (EVLR…RAPG), 80 to 101 (AAGA…VCGE), 151 to 179 (ALLP…GPTL), and 191 to 232 (AASR…GGGD). Over residues 211 to 220 (APARKNHKKM) the composition is skewed to basic residues.

The protein belongs to the FAM246 family.

The chain is Protein FAM246B from Homo sapiens (Human).